The primary structure comprises 116 residues: MRLIYIFMVSIVTTLHASSSAILDPNDVKFTTKNVESPDSSDAAYVAGRILRGTDGNVNREQERKILLKRKHKRHYYKPSHAHDSAGSEAFHSAKKALKSSIRATKARLVPPYQRR.

An N-terminal signal peptide occupies residues 1–17 (MRLIYIFMVSIVTTLHA). The short motif at 49–64 (RILRGTDGNVNREQER) is the RxLR-dEER element.

The protein belongs to the RxLR effector family.

The protein resides in the secreted. The protein localises to the host cytoplasm. It is found in the host nucleus. Effector that acts as a broad suppressor of cell death to interrupt plant immunity. Inhibits cell death induced by cell death-inducing proteins, including the PAMP elicitor INF1 from P.infestans. The polypeptide is Secreted RxLR effector protein 9 (Plasmopara viticola (Downy mildew of grapevine)).